We begin with the raw amino-acid sequence, 195 residues long: Protein GrpE (195 aa).

The span at 1-24 (MSSKEQNTPDEQVSQESEMEQGQQ) shows a compositional bias: polar residues. The tract at residues 1 to 40 (MSSKEQNTPDEQVSQESEMEQGQQAEAAPETVDVVDPRDE) is disordered.

This sequence belongs to the GrpE family. In terms of assembly, homodimer.

The protein resides in the cytoplasm. Participates actively in the response to hyperosmotic and heat shock by preventing the aggregation of stress-denatured proteins, in association with DnaK and GrpE. It is the nucleotide exchange factor for DnaK and may function as a thermosensor. Unfolded proteins bind initially to DnaJ; upon interaction with the DnaJ-bound protein, DnaK hydrolyzes its bound ATP, resulting in the formation of a stable complex. GrpE releases ADP from DnaK; ATP binding to DnaK triggers the release of the substrate protein, thus completing the reaction cycle. Several rounds of ATP-dependent interactions between DnaJ, DnaK and GrpE are required for fully efficient folding. This chain is Protein GrpE, found in Sodalis glossinidius (strain morsitans).